Reading from the N-terminus, the 428-residue chain is C4-dicarboxylate transport protein (428 aa).

The next 9 membrane-spanning stretches (helical) occupy residues 8 to 28 (SLYV…HFYP), 44 to 64 (LIKM…IAGM), 76 to 96 (VALL…LIIV), 142 to 162 (IGAF…LFGF), 184 to 204 (VIFG…FGAM), 222 to 242 (LIIC…GSIA), 289 to 309 (VVGL…SIYL), 326 to 346 (IFHQ…AAGV), and 352 to 372 (IVLA…LALI).

The protein belongs to the dicarboxylate/amino acid:cation symporter (DAACS) (TC 2.A.23) family.

The protein resides in the cell inner membrane. Functionally, responsible for the transport of dicarboxylates such as succinate, fumarate, and malate from the periplasm across the membrane. This is C4-dicarboxylate transport protein from Klebsiella pneumoniae (strain 342).